A 172-amino-acid polypeptide reads, in one-letter code: uncharacterized protein (172 aa).

4 helical membrane passes run 20–40, 48–68, 76–96, and 146–166; these read LVLI…EYIF, CVYE…ALII, LILI…HSFV, and MTEY…LILF.

It localises to the cell membrane. This is an uncharacterized protein from Rickettsia prowazekii (strain Madrid E).